Consider the following 453-residue polypeptide: Homogentisate 1,2-dioxygenase (453 aa).

Residue His-306 is the Proton acceptor of the active site. Residues His-349 and Glu-355 each contribute to the Fe cation site. Residues Tyr-364 and His-385 each contribute to the homogentisate site. A Fe cation-binding site is contributed by His-385.

It belongs to the homogentisate dioxygenase family. In terms of assembly, hexamer; dimer of trimers. The cofactor is Fe cation.

The catalysed reaction is homogentisate + O2 = 4-maleylacetoacetate + H(+). Its pathway is amino-acid degradation; L-phenylalanine degradation; acetoacetate and fumarate from L-phenylalanine: step 4/6. Involved in the catabolism of homogentisate (2,5-dihydroxyphenylacetate or 2,5-OH-PhAc), a central intermediate in the degradation of phenylalanine and tyrosine. Catalyzes the oxidative ring cleavage of the aromatic ring of homogentisate to yield maleylacetoacetate. The polypeptide is Homogentisate 1,2-dioxygenase (Rhizobium etli (strain ATCC 51251 / DSM 11541 / JCM 21823 / NBRC 15573 / CFN 42)).